Here is a 1182-residue protein sequence, read N- to C-terminus: Protein patched homolog 2 (1182 aa).

The Cytoplasmic segment spans residues methionine 1 to lysine 57. The chain crosses the membrane as a helical span at residues valine 58–isoleucine 78. The Extracellular portion of the chain corresponds to glutamate 79–serine 394. Asparagine 370 carries N-linked (GlcNAc...) asparagine glycosylation. The SSD domain occupies serine 394–leucine 552. Residues threonine 395–leucine 414 traverse the membrane as a helical segment. At arginine 415–alanine 428 the chain is on the cytoplasmic side. A helical transmembrane segment spans residues glycine 429–isoleucine 449. The Extracellular segment spans residues threonine 450 to glutamine 457. Residues valine 458–phenylalanine 478 traverse the membrane as a helical segment. The Cytoplasmic portion of the chain corresponds to threonine 479–serine 501. The chain crosses the membrane as a helical span at residues valine 502 to proline 522. Topologically, residues alanine 523–alanine 531 are extracellular. Residues alanine 532–leucine 552 form a helical membrane-spanning segment. The Cytoplasmic segment spans residues aspartate 553 to lysine 686. A helical membrane pass occupies residues alanine 687–valine 707. Residues glutamine 708–cysteine 963 are Extracellular-facing. Residue asparagine 812 is glycosylated (N-linked (GlcNAc...) asparagine). Residues phenylalanine 964 to leucine 984 traverse the membrane as a helical segment. Residues serine 985 to leucine 991 are Cytoplasmic-facing. A helical transmembrane segment spans residues isoleucine 992 to isoleucine 1012. Position 1013 (lysine 1013) is a topological domain, extracellular. Residues leucine 1014–valine 1034 traverse the membrane as a helical segment. Residues histidine 1035–aspartate 1064 are Cytoplasmic-facing. A helical transmembrane segment spans residues glycine 1065–isoleucine 1085. Arginine 1086 is a topological domain (extracellular). A helical membrane pass occupies residues tyrosine 1087–leucine 1107. The Cytoplasmic portion of the chain corresponds to proline 1108–threonine 1182.

It belongs to the patched family. In terms of tissue distribution, expressed in epithelial cells of the developing hair, tooth and whisker.

The protein localises to the membrane. In terms of biological role, plays a role in the control of cellular growth. May have a role in epidermal development. May act as a receptor for Sonic hedgehog (SHH). The sequence is that of Protein patched homolog 2 (Ptch2) from Mus musculus (Mouse).